The chain runs to 50 residues: Sproutin (50 aa).

A Phosphoserine; by PKC modification is found at S8.

In terms of tissue distribution, brain.

In terms of biological role, neurite outgrowth factor. The sequence is that of Sproutin from Rattus norvegicus (Rat).